The following is a 501-amino-acid chain: MTQINNRSVWFVIGTQHLYGVETLRQVERHGQQVVDSLNRSGILPFRLQIRPLVKTPDEALALCREANYDSECYGIMTWLHTFSPAKMWIGGLSVLHKPLLQFHTQFNAEIPWDSMDMDFMNLNQTAHGGREFGFIGARMRLPHQVVTGHWQDERTLLRIGQWMRTAAALQAGRQLKVARFGDNMREVAVTEGDKVAAQIQFGYSVNGWGVGDLVEVINQVKDGDVNALVDEYESRYVFSAAAAVGGAKRQNVLDAARIELGIGRFLDDEGCRAFTTNFQTLHGMTQLPGLAVQRLMQQGYGFAGEGDWKTAALLHICKVMAGDLTGGTSFMEDYTYHFAPDNDLVLGSHMLEVCPSIASEARPLLDVQPLGIGGKADPARLIFAAKAGRAVNASVIDMGDRFRLLVNVLDAVEPPRALPKLPVARALWHAQPSLATASEAWILGGGAHHTVFSQALTVDDLRLYGEMLGIEVVVIDEQTTLHGLRDALRWNEAYYRLNQR.

Glu-306, Glu-333, His-350, and His-450 together coordinate Mn(2+).

The protein belongs to the arabinose isomerase family. As to quaternary structure, homohexamer. Requires Mn(2+) as cofactor.

It carries out the reaction beta-L-arabinopyranose = L-ribulose. It participates in carbohydrate degradation; L-arabinose degradation via L-ribulose; D-xylulose 5-phosphate from L-arabinose (bacterial route): step 1/3. Catalyzes the conversion of L-arabinose to L-ribulose. This is L-arabinose isomerase from Erwinia tasmaniensis (strain DSM 17950 / CFBP 7177 / CIP 109463 / NCPPB 4357 / Et1/99).